A 208-amino-acid chain; its full sequence is Small ribosomal subunit protein uS5 (208 aa).

Polar residues predominate over residues 1 to 19 (MTDSNNQSPNKKTSGSSGA). The interval 1–54 (MTDSNNQSPNKKTSGSSGAPTAADGRQENRRSRGEKRGGRRDRRGQERDSEWQE) is disordered. Composition is skewed to basic and acidic residues over residues 25–37 (GRQENRRSRGEKR) and 44–54 (RGQERDSEWQE). In terms of domain architecture, S5 DRBM spans 52–115 (WQERVVQIRR…ADGKKHLVRV (64 aa)).

It belongs to the universal ribosomal protein uS5 family. As to quaternary structure, part of the 30S ribosomal subunit. Contacts proteins S4 and S8.

Functionally, with S4 and S12 plays an important role in translational accuracy. In terms of biological role, located at the back of the 30S subunit body where it stabilizes the conformation of the head with respect to the body. The protein is Small ribosomal subunit protein uS5 of Prochlorococcus marinus (strain NATL1A).